Reading from the N-terminus, the 169-residue chain is S-ribosylhomocysteine lyase (169 aa).

Fe cation-binding residues include His54, His58, and Cys129.

Belongs to the LuxS family. In terms of assembly, homodimer. Fe cation serves as cofactor.

It carries out the reaction S-(5-deoxy-D-ribos-5-yl)-L-homocysteine = (S)-4,5-dihydroxypentane-2,3-dione + L-homocysteine. In terms of biological role, involved in the synthesis of autoinducer 2 (AI-2) which is secreted by bacteria and is used to communicate both the cell density and the metabolic potential of the environment. The regulation of gene expression in response to changes in cell density is called quorum sensing. Catalyzes the transformation of S-ribosylhomocysteine (RHC) to homocysteine (HC) and 4,5-dihydroxy-2,3-pentadione (DPD). This chain is S-ribosylhomocysteine lyase, found in Actinobacillus pleuropneumoniae serotype 5b (strain L20).